A 348-amino-acid chain; its full sequence is RNA 3'-terminal phosphate cyclase (348 aa).

ATP contacts are provided by residues Q107 and 290-294 (HLADQ). Catalysis depends on H316, which acts as the Tele-AMP-histidine intermediate.

This sequence belongs to the RNA 3'-terminal cyclase family. Type 1 subfamily.

Its subcellular location is the cytoplasm. The enzyme catalyses a 3'-end 3'-phospho-ribonucleotide-RNA + ATP = a 3'-end 2',3'-cyclophospho-ribonucleotide-RNA + AMP + diphosphate. Its function is as follows. Catalyzes the conversion of 3'-phosphate to a 2',3'-cyclic phosphodiester at the end of RNA. The mechanism of action of the enzyme occurs in 3 steps: (A) adenylation of the enzyme by ATP; (B) transfer of adenylate to an RNA-N3'P to produce RNA-N3'PP5'A; (C) and attack of the adjacent 2'-hydroxyl on the 3'-phosphorus in the diester linkage to produce the cyclic end product. The biological role of this enzyme is unknown but it is likely to function in some aspects of cellular RNA processing. The protein is RNA 3'-terminal phosphate cyclase of Nostoc punctiforme (strain ATCC 29133 / PCC 73102).